Consider the following 233-residue polypeptide: Small ribosomal subunit protein uS2 (233 aa).

Belongs to the universal ribosomal protein uS2 family.

This is Small ribosomal subunit protein uS2 from Clostridium acetobutylicum (strain ATCC 824 / DSM 792 / JCM 1419 / IAM 19013 / LMG 5710 / NBRC 13948 / NRRL B-527 / VKM B-1787 / 2291 / W).